Here is a 299-residue protein sequence, read N- to C-terminus: Secreted LysM effector ldpB (299 aa).

An N-terminal signal peptide occupies residues 1–19; that stretch reads MGLTSILIAQVLFLGAANS. LysM domains follow at residues 46–91, 135–182, and 211–258; these read WVND…SYCV, AFYK…YVCI, and KYHK…YVCV. Asn-154 carries N-linked (GlcNAc...) asparagine glycosylation. Residues 266 to 283 are compositionally biased toward low complexity; sequence ATATPQPTPQPQQSSSPD. Residues 266–288 are disordered; the sequence is ATATPQPTPQPQQSSSPDQPMPQ.

This sequence belongs to the secreted LysM effector family.

It is found in the secreted. Its subcellular location is the cell wall. It localises to the extracellular space. The protein localises to the extracellular matrix. In terms of biological role, cell wall chitin of A.fumigatus recruits lung eosinophils during infection and ldpB might have a role in sequestration of chitin and act as triggers of host immunity to dampen host defense. This is Secreted LysM effector ldpB from Aspergillus fumigatus (strain ATCC MYA-4609 / CBS 101355 / FGSC A1100 / Af293) (Neosartorya fumigata).